The chain runs to 207 residues: N-(5'-phosphoribosyl)anthranilate isomerase (207 aa).

The protein belongs to the TrpF family.

It carries out the reaction N-(5-phospho-beta-D-ribosyl)anthranilate = 1-(2-carboxyphenylamino)-1-deoxy-D-ribulose 5-phosphate. The protein operates within amino-acid biosynthesis; L-tryptophan biosynthesis; L-tryptophan from chorismate: step 3/5. The polypeptide is N-(5'-phosphoribosyl)anthranilate isomerase (Halorhodospira halophila (strain DSM 244 / SL1) (Ectothiorhodospira halophila (strain DSM 244 / SL1))).